A 505-amino-acid polypeptide reads, in one-letter code: Maturase K (505 aa).

It belongs to the intron maturase 2 family. MatK subfamily.

Its subcellular location is the plastid. The protein resides in the chloroplast. Functionally, usually encoded in the trnK tRNA gene intron. Probably assists in splicing its own and other chloroplast group II introns. The protein is Maturase K of Allamanda cathartica (Yellow allamanda).